A 1074-amino-acid polypeptide reads, in one-letter code: Formin-G (1074 aa).

In terms of domain architecture, GBD/FH3 spans 34-423 (LQMQQGSKTY…DKINEFEKKI (390 aa)). Disordered regions lie at residues 476-507 (QSISPSQDSSNNQKASSSSSNTSTLNDSDIQS) and 549-639 (FTPT…NPSS). Low complexity predominate over residues 481-503 (SQDSSNNQKASSSSSNTSTLNDS). Residues 502 to 530 (DSDIQSIQSSLKEATLEIERLKLAIEEKM) are a coiled coil. The segment covering 549 to 561 (FTPTSPDISNDGQ) has biased composition (polar residues). The segment covering 568-610 (APPPSPSPPPPISGGGAPPPPPPPPPPPSGGGAPPPPPPPPPS) has biased composition (pro residues). The 27-residue stretch at 597–623 (GGGAPPPPPPPPPSGGKKAGAPGAPPT) folds into the FH1 domain. Residues 631-1031 (NKPVINPSSK…ASGDNGAVQN (401 aa)) enclose the FH2 domain. Positions 914–971 (DINDLEKQFNISKNNCKKVLEANIPSSSKFQSTIGSFLEKTEIDIKNLKENQKNIVDS) form a coiled coil. The DAD domain maps to 1037–1073 (GADPLAALANAIKLGQTGLRKRPGPENSSGGSQLNLN). The interval 1053–1074 (TGLRKRPGPENSSGGSQLNLNK) is disordered. Residues 1062 to 1074 (ENSSGGSQLNLNK) are compositionally biased toward polar residues.

Belongs to the formin homology family. Diaphanous subfamily. As to quaternary structure, interacts (via GBD/FH3 domain) with activated Rho-GTPases.

In terms of biological role, formins play an important role in the nucleation of actin and the formation of linear actin filaments. This is Formin-G (forG) from Dictyostelium discoideum (Social amoeba).